Consider the following 140-residue polypeptide: PDZ domain-containing protein 11 (140 aa).

A PDZ domain is found at 47–129; it reads TITLKKPPGA…ISMRVRFFPY (83 aa).

Interacts with ATP2B1, ATP2B2, ATP2B3, ATP2B4 and ATP7A. Interacts with PLEKHA7 (via WW domains) at zonula adherens; this interaction is essential for the interaction between PLEKHA7 and the ADAM10-binding protein TSPAN33. Interacts with SLC5A6. As to expression, widely expressed (at protein level).

Its subcellular location is the secreted. It localises to the cytoplasm. It is found in the cell junction. The protein localises to the adherens junction. The protein resides in the cell membrane. In terms of biological role, mediates docking of ADAM10 to zonula adherens by interacting with PLEKHA7 which is required for PLEKHA7 to interact with the ADAM10-binding protein TSPAN33. The protein is PDZ domain-containing protein 11 (PDZD11) of Homo sapiens (Human).